The primary structure comprises 107 residues: Phosphoribosyl-ATP pyrophosphatase (107 aa).

The protein belongs to the PRA-PH family.

It is found in the cytoplasm. It catalyses the reaction 1-(5-phospho-beta-D-ribosyl)-ATP + H2O = 1-(5-phospho-beta-D-ribosyl)-5'-AMP + diphosphate + H(+). It participates in amino-acid biosynthesis; L-histidine biosynthesis; L-histidine from 5-phospho-alpha-D-ribose 1-diphosphate: step 2/9. This Rhizobium meliloti (strain 1021) (Ensifer meliloti) protein is Phosphoribosyl-ATP pyrophosphatase (hisE).